A 284-amino-acid chain; its full sequence is Shikimate dehydrogenase (NADP(+)) (284 aa).

Residues Ser20–Ser22 and Ser67 contribute to the shikimate site. Residue Lys71 is the Proton acceptor of the active site. Asp83 contacts NADP(+). Shikimate is bound by residues Asn92 and Asp107. NADP(+) contacts are provided by residues Gly129–Ala133 and Ile227. Tyr229 is a shikimate binding site. Gly250 contacts NADP(+).

This sequence belongs to the shikimate dehydrogenase family. Homodimer.

It carries out the reaction shikimate + NADP(+) = 3-dehydroshikimate + NADPH + H(+). It participates in metabolic intermediate biosynthesis; chorismate biosynthesis; chorismate from D-erythrose 4-phosphate and phosphoenolpyruvate: step 4/7. Involved in the biosynthesis of the chorismate, which leads to the biosynthesis of aromatic amino acids. Catalyzes the reversible NADPH linked reduction of 3-dehydroshikimate (DHSA) to yield shikimate (SA). This chain is Shikimate dehydrogenase (NADP(+)), found in Streptococcus pneumoniae (strain P1031).